We begin with the raw amino-acid sequence, 269 residues long: Meiotically up-regulated gene 43 protein (269 aa).

Its subcellular location is the mitochondrion. Has a role in meiosis. This chain is Meiotically up-regulated gene 43 protein (mug43), found in Schizosaccharomyces pombe (strain 972 / ATCC 24843) (Fission yeast).